We begin with the raw amino-acid sequence, 521 residues long: MMLMMLPFIGSVSVSESLVAMTTVCLVYLILKFFQTEIPEGLRRLPGPKPLPIIGNVLEMGSRPYLSLTAMSKRYGNVFQIQIGMRPVVVLSGSETVRQALIKQGDDFAGRPDLYSFRFINEGKSLAFSTDKAGIWRARRKLAYSALRSFATLEGTTPEYSCVLEEHVCKEGEYLIKQLNTAMTADGSFDPFRHIVVSVANVICGMCFGRRYDHDDQELVGLVTLSDEFGRVVGSGNPADFIPILQYLPSATMKNFLRINGRFTEFVQKIVTEHYTTFDKDNIRDITDSLIDHCEDRKLDENSNVQMSDEKIVGIVNDLFGAGFDTVSTALSWSVMYLVAHPEIQERLYQEIEDKVGLDRMPLLSDKPNLPFLEAFILEILRHSSFLPFTIPHCTTKDTSLNGYFIPKDTCVFINQWQINHDPEMWKDPSSFNPDRFLSADGSEVNKLDGEKVMAFGMGKRRCIGEVIARNEVYLFLAILIQKLHFLPIPGEKLDMTPEYGLTMKHKRCHLKATMRARNEH.

Residue Phe229 participates in substrate binding. Cys463 is a binding site for heme.

Belongs to the cytochrome P450 family. Heme is required as a cofactor.

It is found in the endoplasmic reticulum membrane. The protein localises to the microsome membrane. It carries out the reaction an organic molecule + reduced [NADPH--hemoprotein reductase] + O2 = an alcohol + oxidized [NADPH--hemoprotein reductase] + H2O + H(+). Functionally, cytochromes P450 are a group of heme-thiolate monooxygenases. They oxidize a variety of structurally unrelated compounds, including steroids, fatty acids, and xenobiotics. The protein is Cytochrome P450 1A1 (cyp1a1) of Limanda limanda (Common dab).